The primary structure comprises 331 residues: Ribosomal RNA small subunit methyltransferase H (331 aa).

Residues 38–40, Asp-56, Phe-83, Asp-100, and Gln-107 contribute to the S-adenosyl-L-methionine site; that span reads GGY. The tract at residues 287–331 is disordered; sequence DEAELAENPRARSARLRVGVRTDAPAGKVDPQALGTPLIPKKGRR.

This sequence belongs to the methyltransferase superfamily. RsmH family.

The protein localises to the cytoplasm. The catalysed reaction is cytidine(1402) in 16S rRNA + S-adenosyl-L-methionine = N(4)-methylcytidine(1402) in 16S rRNA + S-adenosyl-L-homocysteine + H(+). Its function is as follows. Specifically methylates the N4 position of cytidine in position 1402 (C1402) of 16S rRNA. This chain is Ribosomal RNA small subunit methyltransferase H, found in Cereibacter sphaeroides (strain ATCC 17023 / DSM 158 / JCM 6121 / CCUG 31486 / LMG 2827 / NBRC 12203 / NCIMB 8253 / ATH 2.4.1.) (Rhodobacter sphaeroides).